The primary structure comprises 594 residues: Dual specificity protein phosphatase CDC14A (594 aa).

The segment at 7 to 162 (ELIGACEFMK…GLQHGFFDFE (156 aa)) is a. Residues 163–176 (TFDVDEYEHYERVE) are linker. Residues 177 to 343 (NGDFNWIVPG…QGDIFRSKLK (167 aa)) are b. The Tyrosine-protein phosphatase domain occupies 179 to 336 (DFNWIVPGKF…KQASLWVQGD (158 aa)). Cys278 acts as the Phosphocysteine intermediate in catalysis. Residues 396 to 435 (GDKLRALKSQRQPRTSPSCAFRSDDTKGHPRAVSQPFRLS) are disordered. Positions 404 to 413 (SQRQPRTSPS) are enriched in polar residues. Ser484 bears the Phosphoserine mark. Residues 487–560 (NLNAATDDPE…PGPHSAKTEE (74 aa)) are disordered. The span at 500–531 (TSSSSKAGFTASPFTNLLNGSSQPTTRNYPEL) shows a compositional bias: polar residues. The segment covering 532–549 (NNNQYNRSSNSNGGNLNS) has biased composition (low complexity). Ser583 carries the phosphoserine modification.

It belongs to the protein-tyrosine phosphatase family. Non-receptor class CDC14 subfamily. In terms of assembly, interacts with KIF20A, which is required to localize CDC14 to the midzone of the mitotic spindle.

Its subcellular location is the nucleus. It localises to the cytoplasm. The protein resides in the cytoskeleton. The protein localises to the microtubule organizing center. It is found in the centrosome. Its subcellular location is the spindle pole. It localises to the spindle. The protein resides in the cell projection. The protein localises to the kinocilium. It is found in the stereocilium. It catalyses the reaction O-phospho-L-tyrosyl-[protein] + H2O = L-tyrosyl-[protein] + phosphate. It carries out the reaction O-phospho-L-seryl-[protein] + H2O = L-seryl-[protein] + phosphate. The enzyme catalyses O-phospho-L-threonyl-[protein] + H2O = L-threonyl-[protein] + phosphate. Its function is as follows. Dual-specificity phosphatase. Required for centrosome separation and productive cytokinesis during cell division. Dephosphorylates SIRT2 around early anaphase. May dephosphorylate the APC subunit FZR1/CDH1, thereby promoting APC-FZR1 dependent degradation of mitotic cyclins and subsequent exit from mitosis. Required for normal hearing. The sequence is that of Dual specificity protein phosphatase CDC14A (CDC14A) from Homo sapiens (Human).